We begin with the raw amino-acid sequence, 124 residues long: Fluoride-specific ion channel FluC 2 (124 aa).

4 helical membrane-spanning segments follow: residues M1–T21, S36–G58, V63–T85, and L104–F124. Na(+) is bound by residues G75 and T78.

The protein belongs to the fluoride channel Fluc/FEX (TC 1.A.43) family. Heterodimer composed of FluC1 and FluC2. Neither FluC1 nor FluC2 alone catalyzes fluoride efflux from liposomes.

It is found in the cell membrane. It carries out the reaction fluoride(in) = fluoride(out). Na(+) is not transported, but it plays an essential structural role and its presence is essential for fluoride channel function. Fluoride-specific ion channel. Important for reducing fluoride concentration in the cell, thus reducing its toxicity. The polypeptide is Fluoride-specific ion channel FluC 2 (Lactobacillus acidophilus (strain ATCC 700396 / NCK56 / N2 / NCFM)).